Reading from the N-terminus, the 168-residue chain is Phosphopantetheine adenylyltransferase (168 aa).

Position 8 (Ser-8) interacts with substrate. ATP contacts are provided by residues 8 to 9 (SF) and His-16. Residues Lys-40, Thr-72, and Arg-86 each contribute to the substrate site. ATP contacts are provided by residues 87-89 (GLR), Glu-97, and 122-128 (YSFLSSS).

It belongs to the bacterial CoaD family. Homohexamer. The cofactor is Mg(2+).

The protein localises to the cytoplasm. The catalysed reaction is (R)-4'-phosphopantetheine + ATP + H(+) = 3'-dephospho-CoA + diphosphate. It functions in the pathway cofactor biosynthesis; coenzyme A biosynthesis; CoA from (R)-pantothenate: step 4/5. Reversibly transfers an adenylyl group from ATP to 4'-phosphopantetheine, yielding dephospho-CoA (dPCoA) and pyrophosphate. In Thermosynechococcus vestitus (strain NIES-2133 / IAM M-273 / BP-1), this protein is Phosphopantetheine adenylyltransferase.